Reading from the N-terminus, the 261-residue chain is Ribonuclease HII (261 aa).

The RNase H type-2 domain occupies 71–259; it reads QYIAGVDEVG…VKEAKLHFES (189 aa). A divalent metal cation is bound by residues Asp-77, Glu-78, and Asp-169.

This sequence belongs to the RNase HII family. It depends on Mn(2+) as a cofactor. Requires Mg(2+) as cofactor.

The protein localises to the cytoplasm. The catalysed reaction is Endonucleolytic cleavage to 5'-phosphomonoester.. Functionally, endonuclease that specifically degrades the RNA of RNA-DNA hybrids. The sequence is that of Ribonuclease HII from Listeria innocua serovar 6a (strain ATCC BAA-680 / CLIP 11262).